Here is a 177-residue protein sequence, read N- to C-terminus: Alpha-crystallin A chain (177 aa).

Position 1 is an N-acetylmethionine (Met1). One can recognise a sHSP domain in the interval 52–162 (VFRNFLDSGI…NWQDRPIPVS (111 aa)). Zn(2+) is bound by residues His100 and Glu102. Cys131 and Cys142 are joined by a disulfide. Residues 146-177 (TRPGDDSNWQDRPIPVSREEKQGTQPEIRADP) form a disordered region. Residue Ser162 is glycosylated (O-linked (GlcNAc) serine). A compositionally biased stretch (basic and acidic residues) spans 162–177 (SREEKQGTQPEIRADP).

This sequence belongs to the small heat shock protein (HSP20) family. Heteropolymer composed of three CRYAA and one CRYAB subunits. Inter-subunit bridging via zinc ions enhances stability, which is crucial as there is no protein turn over in the lens. Can also form homodimers and homotetramers (dimers of dimers) which serve as the building blocks of homooligomers.

The protein resides in the cytoplasm. Its subcellular location is the nucleus. In terms of biological role, contributes to the transparency and refractive index of the lens. May act as a chaperone, preventing aggregation of various proteins under a wide range of stress conditions. The polypeptide is Alpha-crystallin A chain (cryaa) (Squalus acanthias (Spiny dogfish)).